We begin with the raw amino-acid sequence, 425 residues long: Serine--tRNA ligase (425 aa).

Residue 232 to 234 participates in L-serine binding; sequence TSE. ATP is bound by residues 263–265 and Val279; that span reads RRE. Glu286 is an L-serine binding site. 350-353 is a binding site for ATP; it reads EVVS. An L-serine-binding site is contributed by Thr387.

It belongs to the class-II aminoacyl-tRNA synthetase family. Type-1 seryl-tRNA synthetase subfamily. Homodimer. The tRNA molecule binds across the dimer.

The protein localises to the cytoplasm. It catalyses the reaction tRNA(Ser) + L-serine + ATP = L-seryl-tRNA(Ser) + AMP + diphosphate + H(+). It carries out the reaction tRNA(Sec) + L-serine + ATP = L-seryl-tRNA(Sec) + AMP + diphosphate + H(+). The protein operates within aminoacyl-tRNA biosynthesis; selenocysteinyl-tRNA(Sec) biosynthesis; L-seryl-tRNA(Sec) from L-serine and tRNA(Sec): step 1/1. Catalyzes the attachment of serine to tRNA(Ser). Is also able to aminoacylate tRNA(Sec) with serine, to form the misacylated tRNA L-seryl-tRNA(Sec), which will be further converted into selenocysteinyl-tRNA(Sec). This chain is Serine--tRNA ligase, found in Methanospirillum hungatei JF-1 (strain ATCC 27890 / DSM 864 / NBRC 100397 / JF-1).